Here is a 97-residue protein sequence, read N- to C-terminus: UPF0213 protein YE0453 (97 aa).

One can recognise a GIY-YIG domain in the interval 4–79 (SLWHLYLLRT…KQLSKQQKEK (76 aa)).

Belongs to the UPF0213 family.

The protein is UPF0213 protein YE0453 of Yersinia enterocolitica serotype O:8 / biotype 1B (strain NCTC 13174 / 8081).